The following is a 781-amino-acid chain: Catalase-peroxidase (781 aa).

Positions 1 to 20 (MLYIYYLFKSLFFHTLFVFS) are cleaved as a signal peptide. A cross-link (tryptophyl-tyrosyl-methioninium (Trp-Tyr) (with M-298)) is located at residues 125-272 (WHSAGTYRIG…LAAVQMGLIY (148 aa)). His126 serves as the catalytic Proton acceptor. The segment at 237–256 (VHHPDEHRGAKEKAAKNSDS) is disordered. Positions 272-298 (YVNPEGPDGRPDPLASARDIRETFARM) form a cross-link, tryptophyl-tyrosyl-methioninium (Tyr-Met) (with W-125). Residue His313 coordinates heme b. Positions 317 to 336 (KTHGAAPADNVGPEPEAGEL) are disordered.

The protein belongs to the peroxidase family. Peroxidase/catalase subfamily. In terms of assembly, homodimer or homotetramer. Heme b is required as a cofactor. In terms of processing, formation of the three residue Trp-Tyr-Met cross-link is important for the catalase, but not the peroxidase activity of the enzyme.

The catalysed reaction is H2O2 + AH2 = A + 2 H2O. The enzyme catalyses 2 H2O2 = O2 + 2 H2O. Its function is as follows. Bifunctional enzyme with both catalase and broad-spectrum peroxidase activity. This Xylella fastidiosa (strain 9a5c) protein is Catalase-peroxidase.